The sequence spans 190 residues: 3-isopropylmalate dehydratase small subunit (190 aa).

It belongs to the LeuD family. LeuD type 1 subfamily. In terms of assembly, heterodimer of LeuC and LeuD.

The enzyme catalyses (2R,3S)-3-isopropylmalate = (2S)-2-isopropylmalate. The protein operates within amino-acid biosynthesis; L-leucine biosynthesis; L-leucine from 3-methyl-2-oxobutanoate: step 2/4. In terms of biological role, catalyzes the isomerization between 2-isopropylmalate and 3-isopropylmalate, via the formation of 2-isopropylmaleate. This is 3-isopropylmalate dehydratase small subunit from Staphylococcus aureus (strain USA300).